The sequence spans 266 residues: Mitochondrial genome maintenance protein MGM101 (266 aa).

The N-terminal 23 residues, Met1–Tyr23, are a transit peptide targeting the mitochondrion. Polar residues-rich tracts occupy residues Lys37–Thr47 and Pro57–Thr68. A disordered region spans residues Lys37–Thr68.

The protein belongs to the MGM101 family. Forms homooligomers in vitro.

It is found in the mitochondrion matrix. Its subcellular location is the mitochondrion nucleoid. Functionally, plays a role in the replication of the mitochondrial genome and the maintenance of its telomeres. Able to catalyze strand annealing and D-loop formation. Binds a wide variety of DNA substrates. Exhibited the highest affinity for DNA molecules carrying 3' ssDNA overhangs (Y-form, 3' FLAP, 3' overhang) and for substrates with complex structures (X-O and Fork). Forms homogeneous ring-shaped structures at the ssDNA native telomeres ends. Oligomers seem to bind to the ssDNA as a filament until they reach the double-stranded region and induce the formation of bends and loops within the double-stranded part of the molecules. The polypeptide is Mitochondrial genome maintenance protein MGM101 (Candida parapsilosis (strain CDC 317 / ATCC MYA-4646) (Yeast)).